The chain runs to 860 residues: Leucine--tRNA ligase (860 aa).

The 'HIGH' region signature appears at 42–52 (PYPSGRLHMGH). Residues 619-623 (KMSKS) carry the 'KMSKS' region motif. Lys-622 provides a ligand contact to ATP.

It belongs to the class-I aminoacyl-tRNA synthetase family.

The protein localises to the cytoplasm. It carries out the reaction tRNA(Leu) + L-leucine + ATP = L-leucyl-tRNA(Leu) + AMP + diphosphate. This Escherichia coli (strain SE11) protein is Leucine--tRNA ligase.